The primary structure comprises 86 residues: Small ribosomal subunit protein uS15 (86 aa).

Belongs to the universal ribosomal protein uS15 family. In terms of assembly, part of the 30S ribosomal subunit. Forms a bridge to the 50S subunit in the 70S ribosome, contacting the 23S rRNA.

Functionally, one of the primary rRNA binding proteins, it binds directly to 16S rRNA where it helps nucleate assembly of the platform of the 30S subunit by binding and bridging several RNA helices of the 16S rRNA. Forms an intersubunit bridge (bridge B4) with the 23S rRNA of the 50S subunit in the ribosome. This chain is Small ribosomal subunit protein uS15, found in Vesicomyosocius okutanii subsp. Calyptogena okutanii (strain HA).